A 700-amino-acid polypeptide reads, in one-letter code: Non-hemolytic phospholipase C (700 aa).

The segment at residues 1-34 (MTNQNRRDFLRLAAGTAGAAALQLFPPVIREALA) is a signal peptide (tat-type signal).

The protein belongs to the bacterial phospholipase C family. Post-translationally, predicted to be exported by the Tat system. The position of the signal peptide cleavage has not been experimentally proven.

It catalyses the reaction a 1,2-diacyl-sn-glycero-3-phosphocholine + H2O = phosphocholine + a 1,2-diacyl-sn-glycerol + H(+). In terms of biological role, hydrolyzes phosphatidylserine as well as phosphatidylcholine. The protein is Non-hemolytic phospholipase C (plcN) of Burkholderia pseudomallei (strain K96243).